The chain runs to 180 residues: L-fuculose phosphate aldolase (180 aa).

Residues Gly24–Asn25, Thr39–Gly40, and Thr66–Ser67 contribute to the substrate site. The active-site Proton donor/acceptor is Glu68. Positions 68, 87, 89, and 147 each coordinate Zn(2+).

This sequence belongs to the aldolase class II family. AraD/FucA subfamily. As to quaternary structure, homotetramer. The cofactor is Zn(2+).

It catalyses the reaction L-fuculose 1-phosphate = (S)-lactaldehyde + dihydroxyacetone phosphate. It functions in the pathway cofactor biosynthesis; coenzyme F420 biosynthesis. Its function is as follows. Involved in the biosynthesis of the coenzyme F420 which requires phospholactate produced via the aldol cleavage of L-fuculose 1-phosphate and the NAD(+)-dependent oxidation of (S)-lactaldehyde. Catalyzes the reversible cleavage of L-fuculose 1-phosphate (Fuc1P) to yield dihydroxyacetone phosphate (DHAP) and S-lactaldehyde. The polypeptide is L-fuculose phosphate aldolase (fucA) (Methanococcus maripaludis (strain C7 / ATCC BAA-1331)).